Here is a 242-residue protein sequence, read N- to C-terminus: MAGHSKWANIKHRKGAQDALKAKIFNKFSKEIMVAVAKGGSDPNSNPALRLIISKARAKSMPKSNIEKAIAKGEGSTSNGENFKEIIYSGTLSHGISVIVVILTDNINRAIASLQALFRRANGQIGKQNSIPYLFEQKGYLEIEKNNLDEDDLMLFSLDNGAEDFQSDEENYMIYCQPRKISELKNEIEKKFSPNFRAVEISYFPNEWVELDQENTEKILNQIDNFLDDEDIQNVYHNLKFA.

It belongs to the TACO1 family.

It is found in the cytoplasm. In Mesomycoplasma hyopneumoniae (strain 232) (Mycoplasma hyopneumoniae), this protein is Probable transcriptional regulatory protein mhp472.